A 343-amino-acid chain; its full sequence is uncharacterized protein (343 aa).

Disordered stretches follow at residues 1–25 (MSSK…LSGT), 62–119 (KNIR…DCSD), and 169–188 (NPKI…TKKS). The segment covering 62–71 (KNIRQFKKSQ) has biased composition (basic residues). Positions 72–81 (NKTDTEKSGE) are enriched in basic and acidic residues. The span at 83–107 (NDSDYSDYSDNSDDVDDLDDVDDLN) shows a compositional bias: acidic residues.

This is an uncharacterized protein from Acanthamoeba polyphaga (Amoeba).